The primary structure comprises 940 residues: Vacuolar protein sorting-associated protein 54 (940 aa).

Thr30 bears the Phosphothreonine mark. The segment at 192–218 (QQLERDKPLENGAQGAPGPGTGGQTPT) is disordered. Residues 299-325 (HAILAEMEQAADQVRQLRAALAELHSH) adopt a coiled-coil conformation.

It belongs to the VPS54 family.

Its subcellular location is the golgi apparatus. It localises to the trans-Golgi network. In terms of biological role, may be involved in retrograde transport from early and late endosomes to late Golgi. Required during spermatogenesis for sperm individualization. The sequence is that of Vacuolar protein sorting-associated protein 54 (scat) from Drosophila melanogaster (Fruit fly).